We begin with the raw amino-acid sequence, 452 residues long: Pup--protein ligase (452 aa).

Glu9 contacts Mg(2+). Arg53 provides a ligand contact to ATP. Tyr55 provides a ligand contact to Mg(2+). Catalysis depends on Asp57, which acts as the Proton acceptor. Glu63 provides a ligand contact to Mg(2+). ATP contacts are provided by Thr66 and Trp419.

Belongs to the Pup ligase/Pup deamidase family. Pup-conjugating enzyme subfamily.

The catalysed reaction is ATP + [prokaryotic ubiquitin-like protein]-L-glutamate + [protein]-L-lysine = ADP + phosphate + N(6)-([prokaryotic ubiquitin-like protein]-gamma-L-glutamyl)-[protein]-L-lysine.. It participates in protein degradation; proteasomal Pup-dependent pathway. Its pathway is protein modification; protein pupylation. In terms of biological role, catalyzes the covalent attachment of the prokaryotic ubiquitin-like protein modifier Pup to the proteasomal substrate proteins, thereby targeting them for proteasomal degradation. This tagging system is termed pupylation. The ligation reaction involves the side-chain carboxylate of the C-terminal glutamate of Pup and the side-chain amino group of a substrate lysine. The polypeptide is Pup--protein ligase (Mycobacterium leprae (strain Br4923)).